We begin with the raw amino-acid sequence, 308 residues long: MGGDHGHSHGDEGGSFYVHLIAGAAAGFAEHCGMYPIDTIKTHIQAIKPGAMQTSSLQITKHIIQQHGITGLFRGLTAVAAGAAPSHAVHFSIYELLKFKFIGSDEDHHPIKVGIAGAIATMTSEAVASPMDVVKQRLQLQITDYKGLTDCTKRIWVKEGIRGFYSGYTTTLVMNVPYNIVYFASYESLKKIIQPWFNNKNPEERSYQLIDHLVAGGGAGMLAAAFTNPFDVVKTRLQTQSDFIASSTINSAKSIKRYGGMMDAMKTIWIEEGMDGYLRGMKPRMVFHSMSSAIVWSVYEYFKFILGE.

A run of 6 helical transmembrane segments spans residues glycine 13–alanine 29, isoleucine 69–valine 89, isoleucine 111–methionine 131, tyrosine 168–alanine 184, leucine 213–valine 233, and methionine 285–phenylalanine 302. Solcar repeat units follow at residues glycine 14–lysine 100, histidine 108–isoleucine 192, and tyrosine 207–isoleucine 305.

It belongs to the mitochondrial carrier (TC 2.A.29) family.

It localises to the mitochondrion inner membrane. Functionally, mitochondrial solute carriers shuttle metabolites, nucleotides, and cofactors through the mitochondrial inner membrane. Mitochondrial iron transporter that mediates iron uptake. Probably required for heme synthesis of hemoproteins and Fe-S cluster assembly. In Dictyostelium discoideum (Social amoeba), this protein is Mitoferrin (mcfF).